We begin with the raw amino-acid sequence, 62 residues long: Large ribosomal subunit protein eL24 (62 aa).

Residues cysteine 6, cysteine 9, cysteine 32, and cysteine 36 each coordinate Zn(2+). The segment at 6-36 (CSFCGELLEPGTGLLFAKRDGSTYYFCSSKC) adopts a C4-type zinc-finger fold.

It belongs to the eukaryotic ribosomal protein eL24 family. In terms of assembly, part of the 50S ribosomal subunit. Forms a cluster with proteins L3 and L14. It depends on Zn(2+) as a cofactor.

In terms of biological role, binds to the 23S rRNA. The polypeptide is Large ribosomal subunit protein eL24 (Methanococcoides burtonii (strain DSM 6242 / NBRC 107633 / OCM 468 / ACE-M)).